The following is a 367-amino-acid chain: Putative isomerase YraM (367 aa).

It belongs to the PrpF family.

This chain is Putative isomerase YraM (yraM), found in Bacillus subtilis (strain 168).